The primary structure comprises 448 residues: UDP-N-acetylmuramoyl-L-alanine--L-glutamate ligase (448 aa).

ATP is bound at residue 118-124; that stretch reads GSKGKST.

The protein belongs to the MurCDEF family. MurD2 subfamily.

It is found in the cytoplasm. The catalysed reaction is UDP-N-acetyl-alpha-D-muramoyl-L-alanine + L-glutamate + ATP = UDP-N-acetyl-alpha-D-muramoyl-L-alanyl-L-glutamate + ADP + phosphate + H(+). Its pathway is cell wall biogenesis; peptidoglycan biosynthesis. In terms of biological role, cell wall formation. Catalyzes the addition of L-glutamate to the nucleotide precursor UDP-N-acetylmuramoyl-L-alanine. This chain is UDP-N-acetylmuramoyl-L-alanine--L-glutamate ligase, found in Salinispora tropica (strain ATCC BAA-916 / DSM 44818 / JCM 13857 / NBRC 105044 / CNB-440).